We begin with the raw amino-acid sequence, 671 residues long: DNA ligase (671 aa).

NAD(+) is bound by residues aspartate 32 to aspartate 36, serine 81 to leucine 82, and glutamate 113. Lysine 115 functions as the N6-AMP-lysine intermediate in the catalytic mechanism. NAD(+)-binding residues include arginine 136, glutamate 173, lysine 290, and lysine 314. Cysteine 408, cysteine 411, cysteine 426, and cysteine 432 together coordinate Zn(2+). The BRCT domain maps to glutamate 593–alanine 671.

Belongs to the NAD-dependent DNA ligase family. LigA subfamily. Mg(2+) serves as cofactor. It depends on Mn(2+) as a cofactor.

The enzyme catalyses NAD(+) + (deoxyribonucleotide)n-3'-hydroxyl + 5'-phospho-(deoxyribonucleotide)m = (deoxyribonucleotide)n+m + AMP + beta-nicotinamide D-nucleotide.. In terms of biological role, DNA ligase that catalyzes the formation of phosphodiester linkages between 5'-phosphoryl and 3'-hydroxyl groups in double-stranded DNA using NAD as a coenzyme and as the energy source for the reaction. It is essential for DNA replication and repair of damaged DNA. The chain is DNA ligase from Salmonella choleraesuis (strain SC-B67).